We begin with the raw amino-acid sequence, 64 residues long: U6-theraphotoxin-Cg1a (64 aa).

The N-terminal stretch at 1-20 (MTRKILAVLLVFTLVACNNA) is a signal peptide. Positions 21 to 38 (EKYSETDVEDSPMIQERR) are excised as a propeptide. Disulfide bonds link C39–C55, C46–C58, and C54–C63.

This sequence belongs to the neurotoxin 36 family. 02 subfamily. In terms of tissue distribution, expressed by the venom gland.

The protein resides in the secreted. Its function is as follows. Probable ion channel inhibitor. The polypeptide is U6-theraphotoxin-Cg1a (Chilobrachys guangxiensis (Chinese earth tiger tarantula)).